Reading from the N-terminus, the 184-residue chain is Ubiquitin-conjugating enzyme E2-23 kDa (184 aa).

Residues 1-148 (MSSPSKRREM…VKEYCERYAK (148 aa)) enclose the UBC core domain. Cysteine 85 functions as the Glycyl thioester intermediate in the catalytic mechanism. The interval 146–184 (YAKPEDISPEEEEEESDEELSDAEGYDSGDEAIMGHADP) is disordered. Acidic residues predominate over residues 152 to 175 (ISPEEEEEESDEELSDAEGYDSGD).

This sequence belongs to the ubiquitin-conjugating enzyme family.

The enzyme catalyses S-ubiquitinyl-[E1 ubiquitin-activating enzyme]-L-cysteine + [E2 ubiquitin-conjugating enzyme]-L-cysteine = [E1 ubiquitin-activating enzyme]-L-cysteine + S-ubiquitinyl-[E2 ubiquitin-conjugating enzyme]-L-cysteine.. It participates in protein modification; protein ubiquitination. Catalyzes the covalent attachment of ubiquitin to other proteins. The sequence is that of Ubiquitin-conjugating enzyme E2-23 kDa (UBC4) from Triticum aestivum (Wheat).